We begin with the raw amino-acid sequence, 289 residues long: Bidirectional sugar transporter SWEET15 (289 aa).

Residues 1–10 lie on the Extracellular side of the membrane; that stretch reads MAMAMANHHT. Residues 11 to 31 form a helical membrane-spanning segment; sequence LGLIFGILGNIISFLVYFAPA. Residues 14–100 form the MtN3/slv 1 domain; it reads IFGILGNIIS…LYFFYAPMQA (87 aa). Topologically, residues 32–45 are cytoplasmic; sequence PTFYRIYKRKSAEG. The helical transmembrane segment at 46-66 threads the bilayer; sequence FHSLPYIVALFSAMLWLYYAL. At 67 to 70 the chain is on the extracellular side; the sequence is LKKD. Residues 71–91 form a helical membrane-spanning segment; it reads AFLLITINSFGCAIESFYILL. The Cytoplasmic segment spans residues 92 to 106; sequence YFFYAPMQAKKQTLK. A helical transmembrane segment spans residues 107–127; it reads VVISLNVGVFSILVVLIQFLL. Residues 128 to 134 lie on the Extracellular side of the membrane; sequence KGSNRIN. The chain crosses the membrane as a helical span at residues 135–155; sequence VFGWICASFSVAVFAAPLSIV. Residues 136–219 enclose the MtN3/slv 2 domain; it reads FGWICASFSV…VLYGFYRNAG (84 aa). Residues 156-167 lie on the Cytoplasmic side of the membrane; that stretch reads AKVIRTKSVEFM. Residues 168-188 form a helical membrane-spanning segment; it reads PFSLSFFLTLSAIMWFAYGLL. Residues 189–193 are Extracellular-facing; sequence KNDPC. The chain crosses the membrane as a helical span at residues 194 to 214; sequence VAIPNILGVILGLVQMVLYGF. Residues 215 to 289 are Cytoplasmic-facing; the sequence is YRNAGKEKME…GELQPNGSTV (75 aa). Residues 249-289 are disordered; that stretch reads GAQQNGIKKSGSEDVKDDEETGNREKSTENSGELQPNGSTV. The span at 277-289 shows a compositional bias: polar residues; the sequence is ENSGELQPNGSTV.

This sequence belongs to the SWEET sugar transporter family. As to quaternary structure, forms homooligomers and/or heterooligomers.

Its subcellular location is the cell membrane. In terms of biological role, mediates both low-affinity uptake and efflux of sugar across the plasma membrane. In Vitis vinifera (Grape), this protein is Bidirectional sugar transporter SWEET15.